Here is a 132-residue protein sequence, read N- to C-terminus: Insulin-like 3 (132 aa).

The signal sequence occupies residues Met-1 to Leu-21. Gln-27 carries the pyrrolidone carboxylic acid modification. Cystine bridges form between Cys-34–Cys-117, Cys-46–Cys-130, and Cys-116–Cys-121. A propeptide spans Leu-67–His-104 (c peptide like).

Belongs to the insulin family. As to quaternary structure, heterodimer of a B chain and an A chain linked by two disulfide bonds. 20% of B chains include an extra N-terminal pentapeptide. Expressed exclusively in Leydig cells of the testis.

It localises to the secreted. Its function is as follows. Seems to play a role in testicular function. May be a trophic hormone with a role in testicular descent in fetal life. Is a ligand for LGR8 receptor. In Bos taurus (Bovine), this protein is Insulin-like 3 (INSL3).